The following is a 2225-amino-acid chain: MDILNRKKGCLVLEDGTKLSGYSFGSERSVAGECVFSTGMVGYNESISDPSYTGQILVFSFPLIGNYGVPSFRERDPESGLAVNFESDKAHVQAIICSEYCDEYSHWAAEKSLSEWLKESNIPGLYGIDTRALITKIREKGSLKGKVIIGDFDESKLEFEDINLRNLVAEVSTKEIKEYKAAENNKKTGEKRKNKKVIVLDCGIKNNQIRCLLNRGVDLKVVPWDYDVVANESINDYDGVFISNGPGDPSLCGKAIENIRKVLALPVAKAVFGVCMGNQLLGLAAGAQTHKMAFGNRGLNQPCVDQISGRCHITSQNHGFVIDSNSLPAGSGWKTYFINANDASNEGIYHESKPWFSVQFHPEAMAGPTDTEYLFDNFVDNVCGEQQHKSPMNKSKIIDCPKGINKVLILGSGGLSIGQAGEFDYSGSQAIKALKEEGIKTILINPNIATVQTSPGLADKVYFLPVNASSVQKVIENENPDGILVTFGGQTALNCGIELYKSGILEKYNCKVLGTPIETIIATEDRGIFAEKLSEINERIAPSMACNSLEESLIEAEKIGYPVIVRAAYCLGGLGSGFADNKEQLTALVTEAMATSSQVLVEKSLKGWKEIEYEVLRDSKDNCITVCNMENFDPLGIHTGESIVVAPSQTLSDREYQMLRETAIKTVRHLGVIGECNIQYSLNPYSEEYCIIEVNARLSRSSALASKATGYPLAFISAKVALGYDLAALRNTITKKTTACFEPSLDYLVVKMPRWDLKKFTRVSNKISSSMKSVGEVMSIGRKFEEAIQKAIRMVMDGAVEGFQAGVFPTSDEELEHPTNNRILVLASAFKDGYSIDRVHQLTKIDKWFLTKLKAIIDLENHLSTYKEPSQIPSEILKFSKQQGFSDKQIARAVGTTELNVRDYRKKMGIIPCTKHIDTVAAEFPAQNNYLYMTYNGETNDVNINEKSYITLGSGSYRIGSSVEFDWCAVSCIRTLRSLGLKSIMINFNPETVSTDYDECDYLYFEELSLERVLDIYERGGPNSNHGVILSVGGQIPNNLAIPLSRCNVKVLGTHPDMIDSAENRYKFSRLLDTIGIDQPLWKELTSVSDTKDFCESVGFPCLVRPSYVLSGAAMNVVHSSQDLETFLTEAAAVSRDHPVVISKFIQEAKEIEIDAVADNGRIVLFAISEHVENAGVHSGDATIVCPAQDLDDATILKVEETARKIAEALNVSGPFNIQFIAKNNEIKVIECNLRCSRSFPFVSKTLNINFIELATKIIIKHQYDLPVVNPINYVGVKVPQFSFIRLKGADPVLGVEMASTGEVACFGNTREEAYVKGLISTGFKAPEKNVLLSIGSFKEKHEFLPSAHKLIKLGYTLFGTQGTADFYSENGVPVTQLNWDEEDLGENVIQKKMTENTIHLFINLPSKNKYRRPSSFMSRGYSLRRVAIDFQVPLITNIKCAKLFVDSLSYMKGPMPIENVDWRTSNKIIRLPGLVDVHVHLREPGATHKEDWDSGTATALAGGFTMVGAMPNTNPAIMDDASFELCKSLAASKARCDYGIFIGATFTNTTTAGKFASDAMGMKMYLEETFAPLPLKDDINVWRDHIMNWPGTTPICVHADGRNLAAILLLGWMYDKHMHVCHVSHKEEIDIIRDAKKRGMKLSCEVSPHHLTLCDKDIPRIGAGQSEVRPKLGTEEDLNALWDNIDYIDMIATDHAPHTWEEKCSAKPPPGFPGLETSLPLMLTAVHNGRITIEDLVMKMHTNPIRIFNLPEQPDTYIEVDMEQEWTIPKKPLYSRCGWTPFEGLQVRGKVVKVVLRGQIAFIDGKIIAQKGFGLNLRSKEYQVEKERLLNTTKPIYDKIPTVQSTKNQTTNITSPSLISDSPNKAINKIKSTSTSTTPNTQEQSTQHLPLVGSNLASAVLNKKEDTLQTAFNISDNSLAGKHIFSVKQFNRKQLHALFGIAHEMRILVKRSGGSDLLKGKVLATLFYEPSTRTQCSFTAAMQRLGGSVVTVDNVSSSVAKGESIADTIQTLESYCDAVCMRHPAVGSVESAIQVAKKPIINAGDGVGEHPTQALLDVFTIREELGTVNGLTITVVGDLKHGRTVHSLVRLLANYQVKINYVSPSSLSMPTEIIKELNEKGIEQKEYTNIESILPTTNVLYVTRVQKERFQSIEEYEKVKDSFIITPHTLTKASDNMIVMHPLPRINEISPEVDSDPRAAYFRQMENGLYVRMSLLALVFGAGV.

Met-1 carries the post-translational modification N-acetylmethionine. Residues 40–390 (MVGYNESISD…NVCGEQQHKS (351 aa)) are GATase (Glutamine amidotransferase). Residues Ser-51, Gly-245, and Gly-247 each contribute to the L-glutamine site. In terms of domain architecture, Glutamine amidotransferase type-1 spans 196 to 388 (KVIVLDCGIK…VDNVCGEQQH (193 aa)). Cys-275 serves as the catalytic Nucleophile; for GATase activity. 4 residues coordinate L-glutamine: Gln-279, Asn-317, Gly-319, and Phe-320. Catalysis depends on for GATase activity residues His-361 and Glu-363. The segment at 391-405 (PMNKSKIIDCPKGIN) is linker. Positions 406–948 (KVLILGSGGL…TNDVNINEKS (543 aa)) are CPSase A. Positions 406–1461 (KVLILGSGGL…MKGPMPIENV (1056 aa)) are CPSase (Carbamoyl-phosphate synthase). Positions 526, 566, 572, 573, 603, 610, 636, 637, 638, 679, and 693 each coordinate ATP. ATP-grasp domains follow at residues 530–722 (AEKL…KVAL) and 1069–1260 (SRLL…KIII). Positions 679, 693, and 695 each coordinate Mg(2+). Mn(2+)-binding residues include Gln-679, Glu-693, and Asn-695. The interval 949-1461 (YITLGSGSYR…MKGPMPIENV (513 aa)) is CPSase B. ATP-binding residues include Arg-1105, Lys-1144, Ile-1146, Glu-1151, Gly-1176, Val-1177, His-1178, Ser-1179, Gln-1219, and Glu-1231. Positions 1219, 1231, and 1233 each coordinate Mg(2+). Positions 1219, 1231, and 1233 each coordinate Mn(2+). In terms of domain architecture, MGS-like spans 1324–1470 (FKAPEKNVLL…VDWRTSNKII (147 aa)). The tract at residues 1463-1797 (WRTSNKIIRL…VRGKVVKVVL (335 aa)) is DHOase (dihydroorotase). Positions 1479 and 1481 each coordinate Zn(2+). Positions 1483 and 1513 each coordinate (S)-dihydroorotate. Residues Lys-1564, His-1599, Cys-1622, His-1623, and Glu-1646 each contribute to the Zn(2+) site. Lys-1564 is subject to N6-carboxylysine. Residue Arg-1670 coordinates (S)-dihydroorotate. Asp-1695 is a binding site for Zn(2+). The active-site For DHOase activity is Asp-1695. Positions 1699 and 1711 each coordinate (S)-dihydroorotate. The interval 1798-1916 (RGQIAFIDGK…DTLQTAFNIS (119 aa)) is linker. Residues 1917-2225 (DNSLAGKHIF…LLALVFGAGV (309 aa)) form an ATCase (Aspartate transcarbamylase) region. Residues Arg-1974 and Thr-1975 each coordinate carbamoyl phosphate. Lys-2002 is a binding site for L-aspartate. 3 residues coordinate carbamoyl phosphate: Arg-2023, His-2051, and Gln-2054. Residues Arg-2084 and Arg-2145 each contribute to the L-aspartate site. 2 residues coordinate carbamoyl phosphate: Leu-2184 and Pro-2185.

The protein in the N-terminal section; belongs to the CarA family. This sequence in the 2nd section; belongs to the CarB family. It in the 3rd section; belongs to the metallo-dependent hydrolases superfamily. DHOase family. CAD subfamily. In the C-terminal section; belongs to the aspartate/ornithine carbamoyltransferase superfamily. ATCase family. In terms of assembly, homohexamer. Mg(2+) serves as cofactor. It depends on Mn(2+) as a cofactor. Zn(2+) is required as a cofactor.

It localises to the cytoplasm. The enzyme catalyses hydrogencarbonate + L-glutamine + 2 ATP + H2O = carbamoyl phosphate + L-glutamate + 2 ADP + phosphate + 2 H(+). The catalysed reaction is L-glutamine + H2O = L-glutamate + NH4(+). It catalyses the reaction hydrogencarbonate + NH4(+) + 2 ATP = carbamoyl phosphate + 2 ADP + phosphate + 2 H(+). It carries out the reaction carbamoyl phosphate + L-aspartate = N-carbamoyl-L-aspartate + phosphate + H(+). The enzyme catalyses (S)-dihydroorotate + H2O = N-carbamoyl-L-aspartate + H(+). It participates in pyrimidine metabolism; UMP biosynthesis via de novo pathway; (S)-dihydroorotate from bicarbonate: step 1/3. It functions in the pathway pyrimidine metabolism; UMP biosynthesis via de novo pathway; (S)-dihydroorotate from bicarbonate: step 2/3. The protein operates within pyrimidine metabolism; UMP biosynthesis via de novo pathway; (S)-dihydroorotate from bicarbonate: step 3/3. Allosterically regulated and controlled by phosphorylation. 5-phosphoribose 1-diphosphate is an activator while UMP is an inhibitor of the CPSase reaction. Its function is as follows. Multifunctional protein that encodes the first 3 enzymatic activities of the de novo pyrimidine pathway: carbamoylphosphate synthetase (CPSase; EC 6.3.5.5), aspartate transcarbamylase (ATCase; EC 2.1.3.2) and dihydroorotase (DHOase; EC 3.5.2.3). The CPSase-function is accomplished in 2 steps, by a glutamine-dependent amidotransferase activity (GATase) that binds and cleaves glutamine to produce ammonia, followed by an ammonium-dependent carbamoyl phosphate synthetase, which reacts with the ammonia, hydrogencarbonate and ATP to form carbamoyl phosphate. The endogenously produced carbamoyl phosphate is sequestered and channeled to the ATCase active site. ATCase then catalyzes the formation of carbamoyl-L-aspartate from L-aspartate and carbamoyl phosphate. In the last step, DHOase catalyzes the cyclization of carbamoyl aspartate to dihydroorotate. The polypeptide is Multifunctional protein pyr1-3 (pyr1-3) (Dictyostelium discoideum (Social amoeba)).